A 361-amino-acid polypeptide reads, in one-letter code: Phosphoserine aminotransferase (361 aa).

Residue arginine 43 participates in L-glutamate binding. Pyridoxal 5'-phosphate is bound by residues 77 to 78 (AS), tryptophan 103, threonine 153, aspartate 172, and glutamine 195. Lysine 196 carries the post-translational modification N6-(pyridoxal phosphate)lysine. Position 237–238 (237–238 (NT)) interacts with pyridoxal 5'-phosphate.

It belongs to the class-V pyridoxal-phosphate-dependent aminotransferase family. SerC subfamily. Homodimer. Pyridoxal 5'-phosphate serves as cofactor.

Its subcellular location is the cytoplasm. The catalysed reaction is O-phospho-L-serine + 2-oxoglutarate = 3-phosphooxypyruvate + L-glutamate. It catalyses the reaction 4-(phosphooxy)-L-threonine + 2-oxoglutarate = (R)-3-hydroxy-2-oxo-4-phosphooxybutanoate + L-glutamate. The protein operates within amino-acid biosynthesis; L-serine biosynthesis; L-serine from 3-phospho-D-glycerate: step 2/3. Its pathway is cofactor biosynthesis; pyridoxine 5'-phosphate biosynthesis; pyridoxine 5'-phosphate from D-erythrose 4-phosphate: step 3/5. In terms of biological role, catalyzes the reversible conversion of 3-phosphohydroxypyruvate to phosphoserine and of 3-hydroxy-2-oxo-4-phosphonooxybutanoate to phosphohydroxythreonine. The polypeptide is Phosphoserine aminotransferase (Desulfotalea psychrophila (strain LSv54 / DSM 12343)).